The primary structure comprises 148 residues: Protein J1 homolog (148 aa).

The protein belongs to the chordopoxvirinae J1 family. In terms of assembly, homodimer. Part of a complex composed of A30, G7, F10 kinase, A15, D2, D3, and J1. Interacts with A45.

The protein resides in the virion. It is found in the host cytoplasm. Its function is as follows. Late protein which is a part of a large complex required for early virion morphogenesis. This complex participates in the formation of virosomes and the incorporation of virosomal contents into nascent immature virions. J1 protein is required for DNA packaging during immature virions (IV) formation. The polypeptide is Protein J1 homolog (Fowlpox virus (strain NVSL) (FPV)).